Here is a 267-residue protein sequence, read N- to C-terminus: NAD kinase (267 aa).

Aspartate 45 (proton acceptor) is an active-site residue. NAD(+)-binding positions include 45–46 (DG), 122–123 (NE), arginine 148, aspartate 150, 161–166 (TAYNKS), alanine 185, and glutamine 223.

The protein belongs to the NAD kinase family. The cofactor is a divalent metal cation.

The protein localises to the cytoplasm. The enzyme catalyses NAD(+) + ATP = ADP + NADP(+) + H(+). In terms of biological role, involved in the regulation of the intracellular balance of NAD and NADP, and is a key enzyme in the biosynthesis of NADP. Catalyzes specifically the phosphorylation on 2'-hydroxyl of the adenosine moiety of NAD to yield NADP. This Levilactobacillus brevis (strain ATCC 367 / BCRC 12310 / CIP 105137 / JCM 1170 / LMG 11437 / NCIMB 947 / NCTC 947) (Lactobacillus brevis) protein is NAD kinase.